We begin with the raw amino-acid sequence, 327 residues long: Aspartate--ammonia ligase (327 aa).

It belongs to the class-II aminoacyl-tRNA synthetase family. AsnA subfamily.

It is found in the cytoplasm. It carries out the reaction L-aspartate + NH4(+) + ATP = L-asparagine + AMP + diphosphate + H(+). The protein operates within amino-acid biosynthesis; L-asparagine biosynthesis; L-asparagine from L-aspartate (ammonia route): step 1/1. The chain is Aspartate--ammonia ligase from Bacillus cereus (strain ATCC 10987 / NRS 248).